A 491-amino-acid polypeptide reads, in one-letter code: Glutamyl-tRNA(Gln) amidotransferase subunit A (491 aa).

Active-site charge relay system residues include lysine 78 and serine 158. The active-site Acyl-ester intermediate is serine 182.

Belongs to the amidase family. GatA subfamily. In terms of assembly, heterotrimer of A, B and C subunits.

The catalysed reaction is L-glutamyl-tRNA(Gln) + L-glutamine + ATP + H2O = L-glutaminyl-tRNA(Gln) + L-glutamate + ADP + phosphate + H(+). In terms of biological role, allows the formation of correctly charged Gln-tRNA(Gln) through the transamidation of misacylated Glu-tRNA(Gln) in organisms which lack glutaminyl-tRNA synthetase. The reaction takes place in the presence of glutamine and ATP through an activated gamma-phospho-Glu-tRNA(Gln). The polypeptide is Glutamyl-tRNA(Gln) amidotransferase subunit A (Bradyrhizobium sp. (strain ORS 278)).